A 280-amino-acid chain; its full sequence is Phosphatidylinositol N-acetylglucosaminyltransferase GPI2 subunit (280 aa).

Over 1-53 (MTRSPWKRLLWLKQEYPDNYTDPSFIELRARQKAESNQKSDRKLSEAARAQIR) the chain is Cytoplasmic. A helical transmembrane segment spans residues 54-74 (LDFISFYQTILNTSFIYITFT). Position 75 (tyrosine 75) is a topological domain, extracellular. Residues 76 to 96 (IYYYGFDPIPPTIFLSFITLI) traverse the membrane as a helical segment. At 97–108 (ISRTKVDPLLSS) the chain is on the cytoplasmic side. A helical transmembrane segment spans residues 109-129 (FMDVKSSLIITFAMLTLSPVL). Topologically, residues 130 to 135 (KSLSKT) are extracellular. A helical transmembrane segment spans residues 136 to 156 (TASDSIWTLSFWLTLWYIFVI). Topologically, residues 157 to 189 (SSTKSKDKPSNLSTNILVALVAVLSSRLSTTID) are cytoplasmic. Residues 190 to 210 (VFCFLLICIQLNIILPTYLSV) form a helical membrane-spanning segment. The Extracellular portion of the chain corresponds to 211-220 (TNKVVPIISN). A helical transmembrane segment spans residues 221 to 241 (IIVYSFLNVALGWIYMLLIFF). At 242–280 (ASVFYITVLPKWFIYWKINYHKRDNDLLSTWDARTPILD) the chain is on the cytoplasmic side.

Belongs to the PIGC family. Component of the phosphatidylinositol N-acetylglucosaminyltransferase (GPI-GlcNAc transferase) complex composed of at least GPI1, GPI2, GPI3, GPI15, GPI19 and ERI1. Interacts with ERI1.

The protein resides in the membrane. The catalysed reaction is a 1,2-diacyl-sn-glycero-3-phospho-(1D-myo-inositol) + UDP-N-acetyl-alpha-D-glucosamine = a 6-(N-acetyl-alpha-D-glucosaminyl)-1-(1,2-diacyl-sn-glycero-3-phospho)-1D-myo-inositol + UDP + H(+). Its pathway is glycolipid biosynthesis; glycosylphosphatidylinositol-anchor biosynthesis. In terms of biological role, part of the complex catalyzing the transfer of N-acetylglucosamine from UDP-N-acetylglucosamine to phosphatidylinositol, the first step of GPI biosynthesis. The chain is Phosphatidylinositol N-acetylglucosaminyltransferase GPI2 subunit (GPI2) from Saccharomyces cerevisiae (strain ATCC 204508 / S288c) (Baker's yeast).